The following is a 215-amino-acid chain: Nucleoredoxin-like protein 1 (215 aa).

Residues Met-1 to Met-164 enclose the Thioredoxin; atypical domain. A disordered region spans residues Asp-190–Gly-215.

It belongs to the nucleoredoxin family.

The protein resides in the cell projection. It is found in the cilium. The protein localises to the photoreceptor outer segment. Functionally, plays an important role in retinal cone photoreceptor survival. May play a role in cone cell viability, slowing down cone degeneration, does not seem to play a role in degenerating rods. This chain is Nucleoredoxin-like protein 1 (nxnl1), found in Danio rerio (Zebrafish).